The following is a 369-amino-acid chain: Cytoplasmic tRNA 2-thiolation protein 1 (369 aa).

The protein belongs to the TtcA family. CTU1/NCS6/ATPBD3 subfamily.

It is found in the cytoplasm. Its pathway is tRNA modification; 5-methoxycarbonylmethyl-2-thiouridine-tRNA biosynthesis. Plays a central role in 2-thiolation of mcm(5)S(2)U at tRNA wobble positions of tRNA(Lys), tRNA(Glu) and tRNA(Gln). Directly binds tRNAs and probably acts by catalyzing adenylation of tRNAs, an intermediate required for 2-thiolation. It is unclear whether it acts as a sulfurtransferase that transfers sulfur from thiocarboxylated URM1 onto the uridine of tRNAs at wobble position. Prior mcm(5) tRNA modification by the elongator complex is required for 2-thiolation. May also be involved in protein urmylation. This Meyerozyma guilliermondii (strain ATCC 6260 / CBS 566 / DSM 6381 / JCM 1539 / NBRC 10279 / NRRL Y-324) (Yeast) protein is Cytoplasmic tRNA 2-thiolation protein 1.